Here is a 126-residue protein sequence, read N- to C-terminus: Methylglyoxal synthase (126 aa).

The MGS-like domain occupies 1 to 126 (MEKKIALIAH…LIKGFEGLNT (126 aa)). Substrate is bound by residues His10, Lys14, 36 to 39 (TGTT), and 56 to 57 (SG). Asp62 serves as the catalytic Proton donor/acceptor. Substrate is bound at residue His89.

It belongs to the methylglyoxal synthase family.

The catalysed reaction is dihydroxyacetone phosphate = methylglyoxal + phosphate. Catalyzes the formation of methylglyoxal from dihydroxyacetone phosphate. The protein is Methylglyoxal synthase of Borrelia garinii subsp. bavariensis (strain ATCC BAA-2496 / DSM 23469 / PBi) (Borreliella bavariensis).